Reading from the N-terminus, the 136-residue chain is Acidic phospholipase A2 CC-PLA2-2 (136 aa).

The first 16 residues, 1–16 (MRTLWIVAVWLMGVEG), serve as a signal peptide directing secretion. Disulfide bonds link Cys42–Cys129, Cys44–Cys60, Cys59–Cys109, Cys65–Cys136, Cys66–Cys102, Cys73–Cys95, and Cys90–Cys100. Ca(2+) is bound by residues Tyr43, Gly45, and Gly47. The active site involves His63. Asp64 provides a ligand contact to Ca(2+). Asp103 is a catalytic residue.

It belongs to the phospholipase A2 family. Group II subfamily. D49 sub-subfamily. Requires Ca(2+) as cofactor. In terms of processing, glycosylated (2.5%). Expressed by the venom gland.

It is found in the secreted. It catalyses the reaction a 1,2-diacyl-sn-glycero-3-phosphocholine + H2O = a 1-acyl-sn-glycero-3-phosphocholine + a fatty acid + H(+). In terms of biological role, snake venom phospholipase A2 that inhibits blood coagulation and platelet aggregation induced by ADP and arachidonic acid. Inhibits tumor cell adhesion and migration in a dose-dependent manner. Abolishes the attachment of human brain microvascular endothelial cells (HBMEC) to fibrinogen (IC(50)=0.2 uM) and dramatically reduces its adhesion to fibronectin (IC(50)=0.3 uM), whereas no effect is observed on type I collagen, vitronectin or laminin 1. Also blocks the cell migration toward fibronectin and fibrinogen. These effects are not dependent of the catalytic activity, but are mediated by alpha-5/beta-1 (ITGA5/ITGB1) and alpha-v-containing (ITGAV) integrins. Also shows anti-angiogenic activity in chicken chorioallantoix membrane assay. Has a relatively high enzymatic activity. PLA2 catalyzes the calcium-dependent hydrolysis of the 2-acyl groups in 3-sn-phosphoglycerides. The sequence is that of Acidic phospholipase A2 CC-PLA2-2 from Cerastes cerastes (Horned desert viper).